A 293-amino-acid chain; its full sequence is Ribosomal protein L11 methyltransferase (293 aa).

The S-adenosyl-L-methionine site is built by threonine 145, glycine 166, aspartate 188, and asparagine 230.

The protein belongs to the methyltransferase superfamily. PrmA family.

It localises to the cytoplasm. The catalysed reaction is L-lysyl-[protein] + 3 S-adenosyl-L-methionine = N(6),N(6),N(6)-trimethyl-L-lysyl-[protein] + 3 S-adenosyl-L-homocysteine + 3 H(+). Functionally, methylates ribosomal protein L11. The polypeptide is Ribosomal protein L11 methyltransferase (Klebsiella pneumoniae subsp. pneumoniae (strain ATCC 700721 / MGH 78578)).